A 770-amino-acid polypeptide reads, in one-letter code: Probable copper-exporting P-type ATPase V (770 aa).

Residues 1–66 enclose the HMA domain; that stretch reads MRVCVTGFNV…AITKAQHVPA (66 aa). The segment at 103–130 is disordered; the sequence is DKPLKASRCGGRPRGPVRGSASWPGEQN. A compositionally biased stretch (low complexity) spans 110-121; sequence RCGGRPRGPVRG. Transmembrane regions (helical) follow at residues 141 to 161, 164 to 184, 193 to 213, 217 to 237, 377 to 397, and 402 to 422; these read VWLALPLGLLALGSSMFFGAY, AGWLAFAATLPVQFVAGWPIL, ALTSNMDTLIALGTLTAFVYS, LFAGGPLFFDTSALIIAFVVL, AVFVPAVIGVAVATFAGWTLI, and VAGMTAAVAVLIIACPCALGL. D460 (4-aspartylphosphate intermediate) is an active-site residue. 2 residues coordinate Mg(2+): D660 and D664. The next 2 membrane-spanning stretches (helical) occupy residues 718–737 and 741–760; these read LGWAFGYNTAAIPLAALGAL and VAGAAMGFSSVSVVTNSLRL.

The protein belongs to the cation transport ATPase (P-type) (TC 3.A.3) family. Type IB subfamily.

The protein localises to the cell membrane. It catalyses the reaction Cu(+)(in) + ATP + H2O = Cu(+)(out) + ADP + phosphate + H(+). Necessary for copper homeostasis and likely functions as a copper exporter. Also required for full virulence. This chain is Probable copper-exporting P-type ATPase V (ctpV), found in Mycobacterium tuberculosis (strain CDC 1551 / Oshkosh).